The chain runs to 270 residues: Flavin-dependent thymidylate synthase (270 aa).

The ThyX domain maps to 13–218; it reads GFVRLVDQMG…PLAWAAFEEH (206 aa). Residues Ser59, 82–84, and Glu90 each bind FAD; that span reads RHR. DUMP-binding positions include 79–82, 90–94, and Arg157; these read QWFR and EISGR. Residues 82 to 92 carry the ThyX motif motif; sequence RHRTASVNEIS. FAD is bound by residues 173–175 and His179; that span reads DLH. Arg184 contributes to the dUMP binding site. The active-site Involved in ionization of N3 of dUMP, leading to its activation is Arg184.

The protein belongs to the thymidylate synthase ThyX family. In terms of assembly, homotetramer. It depends on FAD as a cofactor.

It carries out the reaction dUMP + (6R)-5,10-methylene-5,6,7,8-tetrahydrofolate + NADPH + H(+) = dTMP + (6S)-5,6,7,8-tetrahydrofolate + NADP(+). The protein operates within pyrimidine metabolism; dTTP biosynthesis. In terms of biological role, catalyzes the reductive methylation of 2'-deoxyuridine-5'-monophosphate (dUMP) to 2'-deoxythymidine-5'-monophosphate (dTMP) while utilizing 5,10-methylenetetrahydrofolate (mTHF) as the methyl donor, and NADPH and FADH(2) as the reductant. This is Flavin-dependent thymidylate synthase from Thermus thermophilus (strain ATCC BAA-163 / DSM 7039 / HB27).